A 651-amino-acid chain; its full sequence is Transcription termination factor FttA (651 aa).

Residues 1-200 (MTFLIKRETQ…ITGLGGFREV (200 aa)) are archaeal CPSF-KH domain. Positions 12–79 (DQILRDIRAV…ISVRPDPEVL (68 aa)) are KHa. A KHb region spans residues 80–147 (LPPEEAEKLI…WAPKVVRTPP (68 aa)). The metallo-beta-lactamase N-terminus stretch occupies residues 188–398 (WIRITGLGGF…LVMESTYGGA (211 aa)). The Zn(2+) site is built by His256, His258, Asp260, His261, His344, and Asp367. Residues 399–592 (NDIQMPREEA…MEVHTIDGFS (194 aa)) form a beta-Casp region. The segment at 593–651 (GHADRRELMNYVAKVRPRPERIITVHGEPQKCLDLATSIHRKFGISTRAPNNLDTIRLR) is metallo-beta-lactamase C-terminus. His618 contributes to the Zn(2+) binding site.

The protein belongs to the metallo-beta-lactamase superfamily. RNA-metabolizing metallo-beta-lactamase-like family. FttA subfamily. In terms of assembly, homodimer. Interacts with RNA polymerase (RNAP), interacts with the Spt4-Spt5 complex. Zn(2+) is required as a cofactor.

Terminates transcription on the whole genome. Termination is linked to FttA-mediated RNA cleavage and does not require NTP hydrolysis. Cleaves endonucleolytically at the RNA exit channel of RNA polymerase (RNAP); the 5'-3' exonuclease activity of this protein degrades the nascent RNA released from RNAP. In terms of biological role, has nuclease activity on single-stranded RNA. The protein is Transcription termination factor FttA of Pyrococcus horikoshii (strain ATCC 700860 / DSM 12428 / JCM 9974 / NBRC 100139 / OT-3).